The primary structure comprises 219 residues: MAAWMAGRQKWLLHPAAKPLIFMVCLLPFAWLFYAAWSDQLGANPAEALVRATGDWTLRFVCIVLAVTPLRVITRTPALARFRRMLGLFAYFYVVLHLLSYSWFDMGFDVADIARDIAKRPFILVGFSAFVLLTPLAATSFNAAIKAMGAKRWQLLHKLVYLIAGLGLLHFFWMRAGKNNFNEVFVYAAIVALLLGWRVWNHWAKARRRVSNNAAVGVH.

5 consecutive transmembrane segments (helical) span residues 17–37, 88–108, 121–141, 153–173, and 184–204; these read AKPLIFMVCLLPFAWLFYAAW, LFAYFYVVLHLLSYSWFDMGF, PFILVGFSAFVLLTPLAATSF, WQLLHKLVYLIAGLGLLHFFW, and VFVYAAIVALLLGWRVWNHWA.

This sequence belongs to the MsrQ family. Heterodimer of a catalytic subunit (MsrP) and a heme-binding subunit (MsrQ). The cofactor is FMN. It depends on heme b as a cofactor.

Its subcellular location is the cell inner membrane. Part of the MsrPQ system that repairs oxidized periplasmic proteins containing methionine sulfoxide residues (Met-O), using respiratory chain electrons. Thus protects these proteins from oxidative-stress damage caused by reactive species of oxygen and chlorine generated by the host defense mechanisms. MsrPQ is essential for the maintenance of envelope integrity under bleach stress, rescuing a wide series of structurally unrelated periplasmic proteins from methionine oxidation. MsrQ provides electrons for reduction to the reductase catalytic subunit MsrP, using the quinone pool of the respiratory chain. This Polaromonas naphthalenivorans (strain CJ2) protein is Protein-methionine-sulfoxide reductase heme-binding subunit MsrQ.